A 450-amino-acid chain; its full sequence is Tubulin alpha-3C chain (450 aa).

The MREC motif signature appears at 1–4; the sequence is MREC. Gln11 serves as a coordination point for GTP. Lys40 is modified (N6-acetyllysine). Residues Glu71, Ser140, Gly144, Thr145, Thr179, Asn206, and Asn228 each coordinate GTP. Glu71 is a Mg(2+) binding site. Residue Glu254 is part of the active site. Tyr282 bears the 3'-nitrotyrosine mark. Ser439 is modified (phosphoserine). A 3'-nitrotyrosine modification is found at Tyr450.

Belongs to the tubulin family. In terms of assembly, dimer of alpha and beta chains. A typical microtubule is a hollow water-filled tube with an outer diameter of 25 nm and an inner diameter of 15 nM. Alpha-beta heterodimers associate head-to-tail to form protofilaments running lengthwise along the microtubule wall with the beta-tubulin subunit facing the microtubule plus end conferring a structural polarity. Microtubules usually have 13 protofilaments but different protofilament numbers can be found in some organisms and specialized cells. Mg(2+) serves as cofactor. In terms of processing, some glutamate residues at the C-terminus are polyglutamylated, resulting in polyglutamate chains on the gamma-carboxyl group. Polyglutamylation plays a key role in microtubule severing by spastin (SPAST). SPAST preferentially recognizes and acts on microtubules decorated with short polyglutamate tails: severing activity by SPAST increases as the number of glutamates per tubulin rises from one to eight, but decreases beyond this glutamylation threshold. Glutamylation is also involved in cilia motility. Post-translationally, some glutamate residues at the C-terminus are monoglycylated but not polyglycylated due to the absence of functional TTLL10 in human. Monoglycylation is mainly limited to tubulin incorporated into cilia and flagella axonemes, which is required for their stability and maintenance. Flagella glycylation controls sperm motility. Both polyglutamylation and monoglycylation can coexist on the same protein on adjacent residues, and lowering glycylation levels increases polyglutamylation, and reciprocally. Acetylation of alpha chains at Lys-40 is located inside the microtubule lumen. This modification has been correlated with increased microtubule stability, intracellular transport and ciliary assembly. In terms of processing, methylation of alpha chains at Lys-40 is found in mitotic microtubules and is required for normal mitosis and cytokinesis contributing to genomic stability. Post-translationally, nitration of Tyr-450 is irreversible and interferes with normal dynein intracellular distribution. Undergoes a tyrosination/detyrosination cycle, the cyclic removal and re-addition of a C-terminal tyrosine residue by the enzymes tubulin tyrosine carboxypeptidase (MATCAP1/KIAA0895L, VASH1 or VASH2) and tubulin tyrosine ligase (TTL), respectively. In terms of processing, tyrosination promotes microtubule interaction with CAP-Gly domain-containing proteins such as CLIP1, CLIP2 and DCTN1. Tyrosination regulates the initiation of dynein-dynactin motility via interaction with DCTN1, which brings the dynein-dynactin complex into contact with microtubules. In neurons, tyrosinated tubulins mediate the initiation of retrograde vesicle transport. Post-translationally, detyrosination is involved in metaphase plate congression by guiding chromosomes during mitosis: detyrosination promotes interaction with CENPE, promoting pole-proximal transport of chromosomes toward the equator. Detyrosination increases microtubules-dependent mechanotransduction in dystrophic cardiac and skeletal muscle. In cardiomyocytes, detyrosinated microtubules are required to resist to contractile compression during contraction: detyrosination promotes association with desmin (DES) at force-generating sarcomeres, leading to buckled microtubules and mechanical resistance to contraction. In terms of tissue distribution, expressed in testis.

It localises to the cytoplasm. Its subcellular location is the cytoskeleton. The catalysed reaction is GTP + H2O = GDP + phosphate + H(+). Functionally, tubulin is the major constituent of microtubules, a cylinder consisting of laterally associated linear protofilaments composed of alpha- and beta-tubulin heterodimers. Microtubules grow by the addition of GTP-tubulin dimers to the microtubule end, where a stabilizing cap forms. Below the cap, tubulin dimers are in GDP-bound state, owing to GTPase activity of alpha-tubulin. In Homo sapiens (Human), this protein is Tubulin alpha-3C chain (TUBA3C).